Here is a 27-residue protein sequence, read N- to C-terminus: Cupiennin-3d (27 aa).

Glutamate 27 carries the glutamic acid 1-amide modification.

As to expression, expressed by the venom gland.

The protein resides in the secreted. This is Cupiennin-3d from Cupiennius salei (American wandering spider).